Reading from the N-terminus, the 106-residue chain is Nucleoid-associated protein Fjoh_2555 (106 aa).

Belongs to the YbaB/EbfC family. As to quaternary structure, homodimer.

The protein resides in the cytoplasm. It localises to the nucleoid. Its function is as follows. Binds to DNA and alters its conformation. May be involved in regulation of gene expression, nucleoid organization and DNA protection. In Flavobacterium johnsoniae (strain ATCC 17061 / DSM 2064 / JCM 8514 / BCRC 14874 / CCUG 350202 / NBRC 14942 / NCIMB 11054 / UW101) (Cytophaga johnsonae), this protein is Nucleoid-associated protein Fjoh_2555.